The following is a 156-amino-acid chain: Small ribosomal subunit protein uS7 (156 aa).

The protein belongs to the universal ribosomal protein uS7 family. Part of the 30S ribosomal subunit. Contacts proteins S9 and S11.

One of the primary rRNA binding proteins, it binds directly to 16S rRNA where it nucleates assembly of the head domain of the 30S subunit. Is located at the subunit interface close to the decoding center, probably blocks exit of the E-site tRNA. In Geobacillus sp. (strain WCH70), this protein is Small ribosomal subunit protein uS7.